The following is a 1005-amino-acid chain: Ephrin type-A receptor 5 (1005 aa).

The disordered stretch occupies residues Met-1–Pro-24. The signal sequence occupies residues Met-1–Val-26. Residues Pro-27–Pro-575 lie on the Extracellular side of the membrane. Residues Glu-62–Arg-240 form the Eph LBD domain. N-linked (GlcNAc...) asparagine glycans are attached at residues Asn-266, Asn-301, Asn-371, Asn-425, Asn-438, and Asn-463. 2 Fibronectin type-III domains span residues Pro-359–Ala-469 and Ala-470–Val-564. A helical transmembrane segment spans residues Ile-576–Leu-596. Residues Ser-597–Glu-1005 lie on the Cytoplasmic side of the membrane. Residues Tyr-652 and Tyr-658 each carry the phosphotyrosine; by autocatalysis modification. One can recognise a Protein kinase domain in the interval Ile-677 to Ile-938. ATP is bound by residues Ile-683–Val-691 and Lys-709. The Proton acceptor role is filled by Asp-802. Residues Tyr-835 and Tyr-984 each carry the phosphotyrosine; by autocatalysis modification. In terms of domain architecture, SAM spans Gly-967–Glu-1005.

This sequence belongs to the protein kinase superfamily. Tyr protein kinase family. Ephrin receptor subfamily. As to quaternary structure, heterotetramer upon binding of the ligand. The heterotetramer is composed of an ephrin dimer and a receptor dimer. Oligomerization is probably required to induce biological responses. Interacts (via SAM domain) with SAMD5 (via SAM domain). Phosphorylated. Phosphorylation is stimulated by the ligand EFNA5. Dephosphorylation upon stimulation by glucose, inhibits EPHA5 forward signaling and results in insulin secretion. In terms of tissue distribution, almost exclusively expressed in the nervous system. Predominantly expressed in neurons.

Its subcellular location is the cell membrane. It is found in the cell projection. The protein resides in the axon. The protein localises to the dendrite. The catalysed reaction is L-tyrosyl-[protein] + ATP = O-phospho-L-tyrosyl-[protein] + ADP + H(+). Its function is as follows. Receptor tyrosine kinase which binds promiscuously GPI-anchored ephrin-A family ligands residing on adjacent cells, leading to contact-dependent bidirectional signaling into neighboring cells. The signaling pathway downstream of the receptor is referred to as forward signaling while the signaling pathway downstream of the ephrin ligand is referred to as reverse signaling. Among GPI-anchored ephrin-A ligands, EFNA5 most probably constitutes the cognate/functional ligand for EPHA5. Functions as an axon guidance molecule during development and may be involved in the development of the retinotectal, entorhino-hippocampal and hippocamposeptal pathways. Together with EFNA5 plays also a role in synaptic plasticity in adult brain through regulation of synaptogenesis. In addition to its function in the nervous system, the interaction of EPHA5 with EFNA5 mediates communication between pancreatic islet cells to regulate glucose-stimulated insulin secretion. This is Ephrin type-A receptor 5 (Epha5) from Rattus norvegicus (Rat).